The sequence spans 687 residues: Adhesion G-protein coupled receptor G1 (687 aa).

The signal sequence occupies residues 1–25 (MTAQSLLQTTLFLLSLLFLVQGAHG). Position 26-33 (26-33 (RGHREDFR)) interacts with heparin. The Extracellular portion of the chain corresponds to 26–402 (RGHREDFRFC…VEVDAVHKHY (377 aa)). Disulfide bonds link C35–C91 and C121–C177. Residues N39, N148, N156, and N171 are each glycosylated (N-linked (GlcNAc...) asparagine). Heparin is bound at residue 190 to 200 (LKHPQKASRRP). The region spanning 224–395 (DTVSFEEDRV…AVLMVSSVEV (172 aa)) is the GAIN-B domain. N-linked (GlcNAc...) asparagine glycans are attached at residues N234, N303, N324, and N341. 2 disulfide bridges follow: C346–C377 and C366–C379. Residues 346-395 (CVFWVEDPTLSNPGRWSSAGCETVRRETQTSCFCNHLTYFAVLMVSSVEV) are GPS. The segment at 384–397 (YFAVLMVSSVEVDA) is stachel. The helical transmembrane segment at 403 to 423 (LSLLSYVGCVVSALACVVTIA) threads the bilayer. Topologically, residues 424 to 442 (AYLCSRRKPRDYTIKVHMN) are cytoplasmic. A helical transmembrane segment spans residues 443–463 (LLLAVFLLDVSFLLSEPVALT). Residues 464–470 (GSQSGCR) lie on the Extracellular side of the membrane. A helical transmembrane segment spans residues 471 to 491 (ASAIFLHFSLLACLSWMGLEG). The Cytoplasmic segment spans residues 492 to 512 (YNLYRLVVEVFGTYIPGYLLK). The helical transmembrane segment at 513 to 533 (LSAMGWGFPIFLVTLVALVDV) threads the bilayer. The Extracellular segment spans residues 534-570 (DNYGPIILAVHRTPESVIYPSMCWIRDSLVSYITNLG). A helical membrane pass occupies residues 571 to 591 (LFSLVFLFNMAMLGTMVVQIL). Residues 592-603 (RLRPHTQKWSHV) are Cytoplasmic-facing. The helical transmembrane segment at 604 to 624 (LTLLGLSLVLGLPWALIFFSF) threads the bilayer. Over 625–630 (ASGTFQ) the chain is Extracellular. The helical transmembrane segment at 631–651 (LVVLYLFSIITSFQGFLIFLW) threads the bilayer. At 652-687 (YWSMRLQARGGPSPLKSNSDSARLPISTGSTSSSRI) the chain is on the cytoplasmic side. A disordered region spans residues 664–687 (SPLKSNSDSARLPISTGSTSSSRI). Residues 666-687 (LKSNSDSARLPISTGSTSSSRI) show a composition bias toward polar residues.

This sequence belongs to the G-protein coupled receptor 2 family. LN-TM7 subfamily. In terms of assembly, heterodimer of 2 chains generated by proteolytic processing; the large extracellular N-terminal fragment (ADGRG1 NT) and the membrane-bound C-terminal fragment (ADGRG1-CT) predominantly remain associated and non-covalently linked. ADGRG1 NT self-associates in a trans-trans manner; the homophilic interaction enhances receptor signaling. Interacts with TGM2. Interacts with heparin; leading to the reduction of ADGRG1 shedding. Interacts with COL3A1. Part of a GPCR-tetraspanin complex at least consisting of ADGRG1, CD81, eventually CD9, and GNA11 in which CD81 is enhancing the association of ADGRG1 with GNA11. In terms of processing, autoproteolytically cleaved into 2 fragments; the large extracellular N-terminal fragment (ADGRG1 NT) and the membrane-bound C-terminal fragment (ADGRG1 CT) predominantly remain associated and non-covalently linked. Shedding to yield the secreted ADGRG1 N-terminal fragment seems to involve metalloprotease(s). Ubiquitinated. Undergoes polyubiquitination upon activation.

Its subcellular location is the cell membrane. The protein localises to the secreted. It localises to the membrane raft. Forms a heterodimer of 2 chains generated by proteolytic processing that remain associated through non-covalent interactions mediated by the GAIN-B domain. In the inactivated receptor, the Stachel sequence (also named stalk) is embedded in the GAIN-B domain, where it adopts a beta-strand conformation. On activation, the Stachel moves into the 7 transmembrane region and adopts a twisted hook-shaped configuration that forms contacts within the receptor, leading to coupling of a G-alpha protein, which activates signaling. The cleaved GAIN-B and N-terminal domains can then dissociate from the rest of the receptor. Adhesion G-protein coupled receptor (aGPCR) for steroid hormone 17alpha-hydroxypregnenolone (17-OH), which is involved in cell adhesion and cell-cell interactions. Ligand binding causes a conformation change that triggers signaling via guanine nucleotide-binding proteins (G proteins) and modulates the activity of downstream effectors, such as RhoA pathway. ADGRG1 is coupled to G(12) and/or G(13) G proteins (GNA12 and GNA13, respectively) and mediates the activation Rho small GTPases. Acts as a potent suppressor of ferroptosis: binding to 17-OH-binding initiates signaling that down-regulates CD36 and alleviates ferroptosis-induced liver injury. Ligand-binding also induces cell adhesion activity via association with proteins such as collagen III/COL3A1 and TGM2. Mediates cell matrix adhesion in developing neurons and hematopoietic stem cells. Involved in cortical development, specifically in maintenance of the pial basement membrane integrity and in cortical lamination: association with COL3A1 in the developing brain inhibits neuronal migration via activation of the RhoA pathway. Together with TGM2, acts as a regulator of myelination and myelin repair in oligodendrocyte precursor cells. Acts as a hemostatic sensor of shear force: G protein-coupled receptor signaling is activated in response to shear force in platelets, promoting G(13) G protein signaling, and platelet shape change and aggregation in a COL3A1-dependent manner. Acts as an inhibitor of VEGFA production thereby inhibiting angiogenesis through a signaling pathway mediated by PRKCA. Plays a role in the maintenance of hematopoietic stem cells in bone marrow niche. Plays an essential role in testis development. The polypeptide is Adhesion G-protein coupled receptor G1 (ADGRG1) (Macaca mulatta (Rhesus macaque)).